We begin with the raw amino-acid sequence, 223 residues long: Large ribosomal subunit protein uL4 (223 aa).

The disordered stretch occupies residues 47–72; it reads GTASTKTRGEVAGGGRKPWPQKHTGR.

It belongs to the universal ribosomal protein uL4 family. Part of the 50S ribosomal subunit.

One of the primary rRNA binding proteins, this protein initially binds near the 5'-end of the 23S rRNA. It is important during the early stages of 50S assembly. It makes multiple contacts with different domains of the 23S rRNA in the assembled 50S subunit and ribosome. Functionally, forms part of the polypeptide exit tunnel. The chain is Large ribosomal subunit protein uL4 from Fervidobacterium nodosum (strain ATCC 35602 / DSM 5306 / Rt17-B1).